A 223-amino-acid chain; its full sequence is Charged multivesicular body protein 3 (223 aa).

Residue G2 is the site of N-myristoyl glycine attachment. Residues 2 to 113 form an intramolecular interaction with C-terminus region; sequence GLFGKTQEKP…LQKSTEVMKA (112 aa). The stretch at 22–54 forms a coiled coil; it reads KIRKEMRVVDRQIRDIQREEEKVKRSVKDAAKK. 2 important for autoinhibitory function regions span residues 59-64 and 168-169; these read VCVVLA and IL. A coiled-coil region spans residues 149 to 223; it reads ESMDDQEEME…MQSRLATLRS (75 aa). The interval 151-221 is intramolecular interaction with N-terminus; that stretch reads MDDQEEMEEA…EAMQSRLATL (71 aa). Residues 151 to 223 form an interaction with VPS4A region; that stretch reads MDDQEEMEEA…MQSRLATLRS (73 aa). K179 is covalently cross-linked (Glycyl lysine isopeptide (Lys-Gly) (interchain with G-Cter in ubiquitin)). The tract at residues 180–223 is disordered; sequence APSKVTDALPEPEPAGAMAASEGDEEDDEEDLEAMQSRLATLRS. 3 interaction with STAMBP regions span residues 196–223, 204–208, and 222–223; these read AMAA…TLRS, EEDDE, and RS. A Phosphoserine modification is found at S200. The MIT-interacting motif signature appears at 201 to 212; it reads EGDEEDDEEDLE. Positions 201–212 are enriched in acidic residues; sequence EGDEEDDEEDLE.

Belongs to the SNF7 family. In terms of assembly, probable core component of the endosomal sorting required for transport complex III (ESCRT-III). ESCRT-III components are thought to multimerize to form a flat lattice on the perimeter membrane of the endosome. Several assembly forms of ESCRT-III may exist that interact and act sequentially. Forms a metastable monomer in solution; its core structure (without part of the putative autoinhibitory C-terminal acidic region) oligomerizes into a flat lattice via two different dimerization interfaces. In vitro, heteromerizes with CHMP2A (but not CHMP4) to form helical tubular structures that expose membrane-interacting sites on the outside whereas VPS4B can associate on the inside of the tubule. May interact with IGFBP7; the relevance of such interaction however remains unclear. Interacts with CHMP2A. Interacts with CHMP4A; the interaction requires the release of CHMP4A autoinhibition. Interacts with VPS4A. Interacts with STAMBP; the interaction appears to relieve the autoinhibition of CHMP3. Interacts with VTA1.

It is found in the cytoplasm. It localises to the cytosol. Its subcellular location is the membrane. The protein localises to the endosome. The protein resides in the late endosome membrane. In terms of biological role, probable core component of the endosomal sorting required for transport complex III (ESCRT-III) which is involved in multivesicular bodies (MVBs) formation and sorting of endosomal cargo proteins into MVBs. MVBs contain intraluminal vesicles (ILVs) that are generated by invagination and scission from the limiting membrane of the endosome and mostly are delivered to lysosomes enabling degradation of membrane proteins, such as stimulated growth factor receptors, lysosomal enzymes and lipids. The MVB pathway appears to require the sequential function of ESCRT-O, -I,-II and -III complexes. ESCRT-III proteins mostly dissociate from the invaginating membrane before the ILV is released. The ESCRT machinery also functions in topologically equivalent membrane fission events, such as the terminal stages of cytokinesis. ESCRT-III proteins are believed to mediate the necessary vesicle extrusion and/or membrane fission activities, possibly in conjunction with the AAA ATPase VPS4. Selectively binds to phosphatidylinositol 3,5-bisphosphate PtdIns(3,5)P2 and PtdIns(3,4)P2 in preference to other phosphoinositides tested. Involved in late stages of cytokinesis. Plays a role in endosomal sorting/trafficking of EGF receptor. In Rattus norvegicus (Rat), this protein is Charged multivesicular body protein 3 (Chmp3).